Here is a 353-residue protein sequence, read N- to C-terminus: Melanin-concentrating hormone receptor 1 (353 aa).

The interval 1–31 (MDLEASLLPTGPNTSNTSDGPDNLTSAGSPP) is disordered. Residues 1-45 (MDLEASLLPTGPNTSNTSDGPDNLTSAGSPPRSGSVSYINIIMPS) are Extracellular-facing. The segment covering 11–31 (GPNTSNTSDGPDNLTSAGSPP) has biased composition (polar residues). N-linked (GlcNAc...) asparagine glycans are attached at residues asparagine 13, asparagine 16, and asparagine 23. A helical membrane pass occupies residues 46–66 (VFGTICLLGIIGNSMVIFAVV). The Cytoplasmic portion of the chain corresponds to 67 to 79 (KKSKLHWCNNVPD). A helical transmembrane segment spans residues 80–100 (IFIINLSVVDLLFLLGMPFMI). The Extracellular segment spans residues 101–118 (HQLMGNGVWHFGETMCTL). Residues cysteine 116 and cysteine 194 are joined by a disulfide bond. Residues 119–139 (ITAMDANSQFTSTYILTAMAI) traverse the membrane as a helical segment. Residues 140–161 (DRYLATVHPISSTKFRKPSVAT) are Cytoplasmic-facing. A helical transmembrane segment spans residues 162–182 (LVICLLWALSFISITPVWLYA). At 183-204 (RLIPFPGGAVGCGIRLPNPDTD) the chain is on the extracellular side. Residues 205 to 225 (LYWFTLYQFFLAFALPFVVIT) form a helical membrane-spanning segment. At 226–257 (AAYVRILQRMTSSVAPASQRSIRLRTKRVTRT) the chain is on the cytoplasmic side. A helical transmembrane segment spans residues 258 to 278 (AIAICLVFFVCWAPYYVLQLT). Topologically, residues 279-294 (QLSISRPTLTFVYLYN) are extracellular. A helical membrane pass occupies residues 295 to 315 (AAISLGYANSCLNPFVYIVLC). At 316-353 (ETFRKRLVLSVKPAAQGQLRAVSNAQTADEERTESKGT) the chain is on the cytoplasmic side.

The protein belongs to the G-protein coupled receptor 1 family. In terms of assembly, interacts with NCDN.

The protein resides in the cell membrane. Its function is as follows. Receptor for melanin-concentrating hormone, coupled to both G proteins that inhibit adenylyl cyclase and G proteins that activate phosphoinositide hydrolysis. The sequence is that of Melanin-concentrating hormone receptor 1 from Macaca mulatta (Rhesus macaque).